The primary structure comprises 79 residues: Short neurotoxin 6 (79 aa).

Residues 1 to 21 (MKTLLLTLVMVTIMCLDLGYT) form the signal peptide. Cystine bridges form between cysteine 24/cysteine 41, cysteine 34/cysteine 59, cysteine 63/cysteine 71, and cysteine 72/cysteine 77.

The protein belongs to the three-finger toxin family. Short-chain subfamily. Type III alpha-neurotoxin sub-subfamily. In terms of tissue distribution, expressed by the venom gland.

The protein resides in the secreted. In terms of biological role, binds with high affinity to muscle nicotinic acetylcholine receptor (nAChR) and hinders acetylcholine binding to the receptor, thereby impairing neuromuscular transmission. Competes with the binding of alpha-bungarotoxin on muscle AChR (from Torpedo) with an IC(50) of 0.18 uM. Causes muscle paralysis, spasms and increased respiration. The sequence is that of Short neurotoxin 6 from Pseudonaja textilis (Eastern brown snake).